Reading from the N-terminus, the 88-residue chain is Small ribosomal subunit protein bS16 (88 aa).

Belongs to the bacterial ribosomal protein bS16 family.

The polypeptide is Small ribosomal subunit protein bS16 (Mycoplasma pneumoniae (strain ATCC 29342 / M129 / Subtype 1) (Mycoplasmoides pneumoniae)).